The primary structure comprises 268 residues: Tryptophan synthase alpha chain (268 aa).

Residues Glu49 and Asp60 each act as proton acceptor in the active site.

Belongs to the TrpA family. In terms of assembly, tetramer of two alpha and two beta chains.

The catalysed reaction is (1S,2R)-1-C-(indol-3-yl)glycerol 3-phosphate + L-serine = D-glyceraldehyde 3-phosphate + L-tryptophan + H2O. It participates in amino-acid biosynthesis; L-tryptophan biosynthesis; L-tryptophan from chorismate: step 5/5. The alpha subunit is responsible for the aldol cleavage of indoleglycerol phosphate to indole and glyceraldehyde 3-phosphate. The polypeptide is Tryptophan synthase alpha chain (Shigella flexneri serotype 5b (strain 8401)).